The primary structure comprises 519 residues: Developmental regulatory protein wetA (519 aa).

6 disordered regions span residues 105–165 (PSRP…MRSS), 270–294 (PSSADDMFSSSHSSDPHSISSWQSD), 301–320 (LSFTPDLQGQDSQWWSPMPS), 325–344 (QQASYLESPTPVRTTQNVGN), 389–452 (SQIH…GSNK), and 470–495 (LTGVAPSGSSKTKARREQEARDRRRK). Low complexity predominate over residues 108–118 (PTATHALSTSP). Over residues 155 to 165 (QSFSPSLMRSS) the composition is skewed to polar residues. Residues 301–315 (LSFTPDLQGQDSQWW) show a composition bias toward polar residues. Over residues 389-400 (SQIHNVSRSPSL) the composition is skewed to polar residues. Over residues 419 to 428 (PTHRRTHSRK) the composition is skewed to basic residues. Residues 435 to 452 (NAPKPAKASGSSSRGSNK) show a composition bias toward low complexity.

Belongs to the wetA family.

Its function is as follows. BrlA, abaA and wetA are pivotal regulators of conidiophore development and conidium maturation. They act individually and together to regulate their own expression and that of numerous other sporulation-specific genes. This Penicillium camembertii protein is Developmental regulatory protein wetA.